The sequence spans 346 residues: Methylthioribose-1-phosphate isomerase (346 aa).

Substrate-binding positions include 47–49 (RGA), R88, and Q195. The active-site Proton donor is D236. 246–247 (NK) contacts substrate.

Belongs to the eIF-2B alpha/beta/delta subunits family. MtnA subfamily.

The enzyme catalyses 5-(methylsulfanyl)-alpha-D-ribose 1-phosphate = 5-(methylsulfanyl)-D-ribulose 1-phosphate. The protein operates within amino-acid biosynthesis; L-methionine biosynthesis via salvage pathway; L-methionine from S-methyl-5-thio-alpha-D-ribose 1-phosphate: step 1/6. Functionally, catalyzes the interconversion of methylthioribose-1-phosphate (MTR-1-P) into methylthioribulose-1-phosphate (MTRu-1-P). The protein is Methylthioribose-1-phosphate isomerase of Maridesulfovibrio salexigens (strain ATCC 14822 / DSM 2638 / NCIMB 8403 / VKM B-1763) (Desulfovibrio salexigens).